The following is a 510-amino-acid chain: Bifunctional pantoate ligase/cytidylate kinase (510 aa).

Positions 1 to 276 (MNKIIIRKTE…CGKTRLIDHV (276 aa)) are pantoate--beta-alanine ligase. An ATP-binding site is contributed by 29-36 (MGNLHDGH). The Proton donor role is filled by His-36. Gln-61 contacts (R)-pantoate. Gln-61 is a beta-alanine binding site. Position 150–153 (150–153 (GEKD)) interacts with ATP. Gln-156 lines the (R)-pantoate pocket. 187-190 (FSSR) contributes to the ATP binding site. The interval 277–510 (FLMKRKPIIA…LNIPKEIQLE (234 aa)) is cytidylate kinase.

In the N-terminal section; belongs to the pantothenate synthetase family. The protein in the C-terminal section; belongs to the cytidylate kinase family. Type 1 subfamily.

It localises to the cytoplasm. It carries out the reaction (R)-pantoate + beta-alanine + ATP = (R)-pantothenate + AMP + diphosphate + H(+). The enzyme catalyses CMP + ATP = CDP + ADP. It catalyses the reaction dCMP + ATP = dCDP + ADP. The protein operates within cofactor biosynthesis; (R)-pantothenate biosynthesis; (R)-pantothenate from (R)-pantoate and beta-alanine: step 1/1. In terms of biological role, catalyzes the condensation of pantoate with beta-alanine in an ATP-dependent reaction via a pantoyl-adenylate intermediate. Functionally, catalyzes the transfer of a phosphate group from ATP to either CMP or dCMP to form CDP or dCDP and ADP, respectively. The chain is Bifunctional pantoate ligase/cytidylate kinase from Prochlorococcus marinus subsp. pastoris (strain CCMP1986 / NIES-2087 / MED4).